Reading from the N-terminus, the 513-residue chain is ATP synthase subunit alpha (513 aa).

An ATP-binding site is contributed by 169–176 (GDRQTGKT).

It belongs to the ATPase alpha/beta chains family. As to quaternary structure, F-type ATPases have 2 components, CF(1) - the catalytic core - and CF(0) - the membrane proton channel. CF(1) has five subunits: alpha(3), beta(3), gamma(1), delta(1), epsilon(1). CF(0) has three main subunits: a(1), b(2) and c(9-12). The alpha and beta chains form an alternating ring which encloses part of the gamma chain. CF(1) is attached to CF(0) by a central stalk formed by the gamma and epsilon chains, while a peripheral stalk is formed by the delta and b chains.

It localises to the cell inner membrane. The catalysed reaction is ATP + H2O + 4 H(+)(in) = ADP + phosphate + 5 H(+)(out). Produces ATP from ADP in the presence of a proton gradient across the membrane. The alpha chain is a regulatory subunit. This Thiobacillus denitrificans (strain ATCC 25259 / T1) protein is ATP synthase subunit alpha.